The following is a 548-amino-acid chain: MAAKDVKFGNDARVKMLEGVNVLADAVKVTLGPKGRNVVLDKSFGAPTITKDGVSVAREIELEDKFQNMGAQMVKEVASKANDAAGDGTTTATVLAQAIVNEGLKAVAAGMNPMDLKRGIDKAVIAAVEQPKRASVECTDTKAIAQVGTISANSDSSVGNIIAEAMEKVGRDGVITVEEGQALQDELDVVEGMQFDRGYLSPYFINNQEAGSVDLENPFILLIDKKVSNIRELLPALEAVAKASRPLLIIAEDVEGEALATLVVNNMRGIVKVAAVKAPGFGDRRKAMLQDIAILTGGIVISEEVGLELEKVALEDLGQAKRVAITKENTTIIDGVGEEAMIQGRVAQIRQQIEDATSDYDKEKLQERVAKLAGGVAVIKVGAATEVEMKEKKDRVEDALHATRAAVEEGVVAGGGVALIRAASKIVDLEGDNEEQNVGIRVALRAMEAPIRQITKNAGDEESVVANNVKAGEGSYGYNAATGEYGDMLEMGILDPTKVTRSALQFAASVAGLMITTEAMVTDLPQKEGAGMPDMGGMGGMGGMGGMM.

ATP contacts are provided by residues 30–33, Lys-51, 87–91, Gly-415, 479–481, and Asp-495; these read TLGP, DGTTT, and NAA.

It belongs to the chaperonin (HSP60) family. Forms a cylinder of 14 subunits composed of two heptameric rings stacked back-to-back. Interacts with the co-chaperonin GroES.

Its subcellular location is the cytoplasm. It catalyses the reaction ATP + H2O + a folded polypeptide = ADP + phosphate + an unfolded polypeptide.. In terms of biological role, together with its co-chaperonin GroES, plays an essential role in assisting protein folding. The GroEL-GroES system forms a nano-cage that allows encapsulation of the non-native substrate proteins and provides a physical environment optimized to promote and accelerate protein folding. The chain is Chaperonin GroEL 1 from Vibrio harveyi (Beneckea harveyi).